A 632-amino-acid chain; its full sequence is MSEESHPNERHMTPRKLFYLALGSVGVVYGDIGTSPLYAFREALKPVAHDGVTRFEVISLISLMIWALTIIVTIKYVLFLLRADNDGEGGTLSLLALLMKTANGHTAILMLLGLMGAALFLGDAMITPALSVLSAVEGLKLVTPRLADYIVPISVVILALLFVVQSRGTGAVAKFFGPITAVWFLVMAAAGISHISDDYGILAAFNPYYAVAFLLHEGFYGIVVLGAVFLTVTGAEALYADLGHFGRRPIQWAWFLLVFPALTLNYLGQGALVLGNPMTMSDPFYLMYPKWALLPVVILATAATIIASQAVITGAFSMVRQGINLGFLPRMEILFTSETNTGQIFVPSVNAVLFIGVIFLVLGFKTSDALATAYGISVTGAMVVTSIMAFEFVRARWNWSLPVAVIALAPLVVLEMIFLGANLLKIHDGGYIPIMIATAFTVVMWTWRRGTAILMEKTRHTDIPLASFVSSIERKSEHSPAQVPGTAIFLTSDPESAPAALLHNLKHNHVLHDRNVILTIRTINKPRVPSHDRYRVEQISERFSRVELLFGFMESQNVSQALATLRKTGLKFDIMSTSFYLGRRKLVPDAKSGMPHWQDRLYIALANAAANPSDYFRLPANRVVELGSHVII.

The next 12 helical transmembrane spans lie at 17–37 (LFYL…TSPL), 60–80 (LISL…VLFL), 106–126 (TAIL…DAMI), 146–166 (LADY…VVQS), 175–195 (FFGP…ISHI), 210–230 (AVAF…AVFL), 254–274 (WFLL…ALVL), 292–312 (ALLP…QAVI), 344–364 (IFVP…VLGF), 370–390 (LATA…IMAF), 401–421 (LPVA…FLGA), and 426–446 (IHDG…VMWT).

The protein belongs to the HAK/KUP transporter (TC 2.A.72) family.

It is found in the cell inner membrane. The enzyme catalyses K(+)(in) + H(+)(in) = K(+)(out) + H(+)(out). In terms of biological role, transport of potassium into the cell. Likely operates as a K(+):H(+) symporter. The polypeptide is Probable potassium transport system protein Kup 1 (Rhizobium johnstonii (strain DSM 114642 / LMG 32736 / 3841) (Rhizobium leguminosarum bv. viciae)).